The following is a 73-amino-acid chain: uncharacterized protein (73 aa).

This is an uncharacterized protein from Escherichia coli (strain K12).